A 500-amino-acid polypeptide reads, in one-letter code: Lysine--tRNA ligase (500 aa).

Mg(2+) contacts are provided by Asp412 and Glu419.

This sequence belongs to the class-II aminoacyl-tRNA synthetase family. As to quaternary structure, homodimer. Mg(2+) serves as cofactor.

The protein localises to the cytoplasm. It carries out the reaction tRNA(Lys) + L-lysine + ATP = L-lysyl-tRNA(Lys) + AMP + diphosphate. The polypeptide is Lysine--tRNA ligase (Kineococcus radiotolerans (strain ATCC BAA-149 / DSM 14245 / SRS30216)).